Reading from the N-terminus, the 270-residue chain is uncharacterized protein (270 aa).

A signal peptide spans Met-1–Gly-22. Cys-23 is lipidated: N-palmitoyl cysteine. Residue Cys-23 is the site of S-diacylglycerol cysteine attachment.

Belongs to the staphylococcal tandem lipoprotein family.

The protein localises to the cell membrane. This is an uncharacterized protein from Staphylococcus aureus (strain NCTC 8325 / PS 47).